Here is a 107-residue protein sequence, read N- to C-terminus: MSTAELAVSYAALILADDGIEVSADKIQTILGAAKVQEVEPIWATIFAKALEGKDIKEILTNVGSAGPATAGAPAAAGAAAPAEEKKEEKEEEKEESDEDMGFGLFD.

A compositionally biased stretch (low complexity) spans 68 to 82 (PATAGAPAAAGAAAP). Positions 68 to 107 (PATAGAPAAAGAAAPAEEKKEEKEEEKEESDEDMGFGLFD) are disordered. A compositionally biased stretch (acidic residues) spans 90 to 101 (KEEEKEESDEDM).

The protein belongs to the eukaryotic ribosomal protein P1/P2 family. P1 and P2 exist as dimers at the large ribosomal subunit.

The protein localises to the cytoplasm. Plays an important role in the elongation step of protein synthesis. The polypeptide is Large ribosomal subunit protein P1 (Penicillium brevicompactum).